A 188-amino-acid polypeptide reads, in one-letter code: Putative glutamine amidotransferase-like protein YvdE homolog (188 aa).

Residues 17–188 enclose the Glutamine amidotransferase type-1 domain; that stretch reads SPFWWNKVSY…IKDLGQGLQA (172 aa).

The protein is Putative glutamine amidotransferase-like protein YvdE homolog of Lactococcus lactis subsp. cremoris (Streptococcus cremoris).